The primary structure comprises 504 residues: Protein psiD (504 aa).

A signal peptide spans 1–21; it reads MKYSYLLLILLLSNLYKEGFS. Asparagine 87, asparagine 136, asparagine 236, asparagine 252, asparagine 290, and asparagine 373 each carry an N-linked (GlcNAc...) asparagine glycan. Residues 111–251 enclose the PA14 domain; the sequence is LTRVGDSTYA…YDACGVCDGH (141 aa). Residues 417–430 are compositionally biased toward low complexity; sequence TVTPTVTPTVTPTP. The segment at 417 to 453 is disordered; sequence TVTPTVTPTVTPTPTTTPTPSPTTVPPRPTPTPLPAD. The segment covering 431 to 453 has biased composition (pro residues); that stretch reads TTTPTPSPTTVPPRPTPTPLPAD. A glycan (N-linked (GlcNAc...) asparagine) is linked at asparagine 483.

It belongs to the prespore-cell-inducing factor family.

Its subcellular location is the secreted. The chain is Protein psiD (psiD) from Dictyostelium discoideum (Social amoeba).